A 486-amino-acid polypeptide reads, in one-letter code: UDP-N-acetylmuramate--L-alanine ligase (486 aa).

Position 126 to 132 (126 to 132) interacts with ATP; sequence GTHGKTS.

This sequence belongs to the MurCDEF family.

The protein resides in the cytoplasm. It catalyses the reaction UDP-N-acetyl-alpha-D-muramate + L-alanine + ATP = UDP-N-acetyl-alpha-D-muramoyl-L-alanine + ADP + phosphate + H(+). It participates in cell wall biogenesis; peptidoglycan biosynthesis. In terms of biological role, cell wall formation. The sequence is that of UDP-N-acetylmuramate--L-alanine ligase from Corynebacterium glutamicum (strain ATCC 13032 / DSM 20300 / JCM 1318 / BCRC 11384 / CCUG 27702 / LMG 3730 / NBRC 12168 / NCIMB 10025 / NRRL B-2784 / 534).